The sequence spans 76 residues: Small proline-rich protein 4 (76 aa).

The interval 38–76 (PKTKDPCVPQAKKQCPARSTTNPAQEKCPAQQDPKCKQK) is disordered.

It belongs to the cornifin (SPRR) family. In terms of processing, cross-linked to membrane proteins by transglutaminase.

Its subcellular location is the cytoplasm. The protein resides in the cell cortex. Cross-linked envelope protein of keratinocytes. Involved in UV-induced cornification. In Mus musculus (Mouse), this protein is Small proline-rich protein 4 (Sprr4).